Reading from the N-terminus, the 258-residue chain is Isoprenyl transferase (258 aa).

Residue aspartate 38 is part of the active site. Residue aspartate 38 coordinates Mg(2+). Substrate is bound by residues 39–42, tryptophan 43, arginine 51, histidine 55, and 83–85; these read GNGR and STE. Asparagine 86 acts as the Proton acceptor in catalysis. Substrate is bound by residues tryptophan 87, arginine 89, arginine 206, and 212–214; that span reads RIS. Residue glutamate 225 coordinates Mg(2+).

It belongs to the UPP synthase family. In terms of assembly, homodimer. The cofactor is Mg(2+).

Functionally, catalyzes the condensation of isopentenyl diphosphate (IPP) with allylic pyrophosphates generating different type of terpenoids. The chain is Isoprenyl transferase from Bacillus cereus (strain ATCC 10987 / NRS 248).